The following is a 1235-amino-acid chain: DNA polymerase catalytic subunit (1235 aa).

Disordered stretches follow at residues 640–692 (QGRF…TAGR) and 1098–1134 (ATAP…ASKP). The span at 650–661 (APKRPAAAREDE) shows a compositional bias: basic and acidic residues. Residues 662–675 (ERPEEEGEDEDERE) show a composition bias toward acidic residues. Positions 676-691 (EGGGEREPEGARETAG) are enriched in basic and acidic residues.

Belongs to the DNA polymerase type-B family. As to quaternary structure, forms a complex with the ssDNA-binding protein UL29, the DNA polymerase processivity factor, and the alkaline exonuclease. Interacts with the putative helicase-primase complex subunit UL8; this interaction may coordinate leading and lagging strand DNA synthesis at the replication fork.

It localises to the host nucleus. The catalysed reaction is DNA(n) + a 2'-deoxyribonucleoside 5'-triphosphate = DNA(n+1) + diphosphate. It catalyses the reaction Endonucleolytic cleavage to 5'-phosphomonoester.. In terms of biological role, replicates viral genomic DNA. The replication complex is composed of six viral proteins: the DNA polymerase, processivity factor, primase, primase-associated factor, helicase, and ssDNA-binding protein. Additionally, the polymerase contains an intrinsic ribonuclease H (RNase H) activity that specifically degrades RNA/DNA heteroduplexes or duplex DNA substrates in the 5' to 3' direction. Therefore, it can catalyze the excision of the RNA primers that initiate the synthesis of Okazaki fragments at a replication fork during viral DNA replication. The chain is DNA polymerase catalytic subunit from Human herpesvirus 1 (strain Angelotti) (HHV-1).